The sequence spans 134 residues: Cytochrome b (134 aa).

A run of 3 helical transmembrane segments spans residues 33–53 (FGSL…FLAI), 77–98 (WLLR…YLHV), and 113–133 (WNIG…GYVL). Positions 83 and 97 each coordinate heme b.

It belongs to the cytochrome b family. As to quaternary structure, the cytochrome bc1 complex contains 11 subunits: 3 respiratory subunits (MT-CYB, CYC1 and UQCRFS1), 2 core proteins (UQCRC1 and UQCRC2) and 6 low-molecular weight proteins (UQCRH/QCR6, UQCRB/QCR7, UQCRQ/QCR8, UQCR10/QCR9, UQCR11/QCR10 and a cleavage product of UQCRFS1). This cytochrome bc1 complex then forms a dimer. It depends on heme b as a cofactor.

The protein resides in the mitochondrion inner membrane. Its function is as follows. Component of the ubiquinol-cytochrome c reductase complex (complex III or cytochrome b-c1 complex) that is part of the mitochondrial respiratory chain. The b-c1 complex mediates electron transfer from ubiquinol to cytochrome c. Contributes to the generation of a proton gradient across the mitochondrial membrane that is then used for ATP synthesis. This is Cytochrome b (MT-CYB) from Platyrrhinus helleri (Heller's broad-nosed bat).